The chain runs to 637 residues: DNA mismatch repair protein MutL (637 aa).

Belongs to the DNA mismatch repair MutL/HexB family.

This protein is involved in the repair of mismatches in DNA. It is required for dam-dependent methyl-directed DNA mismatch repair. May act as a 'molecular matchmaker', a protein that promotes the formation of a stable complex between two or more DNA-binding proteins in an ATP-dependent manner without itself being part of a final effector complex. The protein is DNA mismatch repair protein MutL of Actinobacillus succinogenes (strain ATCC 55618 / DSM 22257 / CCUG 43843 / 130Z).